The following is a 228-amino-acid chain: Growth arrest-specific protein 1 homolog (228 aa).

The first 17 residues, 1–17 (MRRVILPLVMTVTLCLA), serve as a signal peptide directing secretion. N-linked (GlcNAc...) asparagine glycosylation is found at asparagine 143 and asparagine 156. Aspartate 205 carries GPI-anchor amidated aspartate lipidation. Positions 206–228 (SSVGHGFNILSAISVYLLTVLVF) are cleaved as a propeptide — removed in mature form.

As to expression, pharynx muscle cells from its early formation, in the two-fold embryo, until the adult stage.

Its subcellular location is the cell membrane. Its function is as follows. Role in pharynx function or development. This is Growth arrest-specific protein 1 homolog (phg-1) from Caenorhabditis elegans.